We begin with the raw amino-acid sequence, 327 residues long: Sideroflexin FSF1 (327 aa).

Ala2 is modified (N-acetylalanine). Transmembrane regions (helical) follow at residues 98-118 (NLVV…TVFW), 143-163 (SQLL…ALGL), 179-199 (LILG…VNVF), and 272-292 (ANLG…LGIF).

This sequence belongs to the sideroflexin family.

The protein resides in the mitochondrion membrane. Its function is as follows. Mitochondrial amino-acid transporter that mediates transport of serine into mitochondria. The protein is Sideroflexin FSF1 of Saccharomyces cerevisiae (strain ATCC 204508 / S288c) (Baker's yeast).